A 415-amino-acid polypeptide reads, in one-letter code: Squalene synthase 1 (415 aa).

2 consecutive transmembrane segments (helical) span residues 281-301 and 391-411; these read AIFRFCAIPQIMAIGTLALCF and LIAIIFIILAILYAYLSSNLL.

It belongs to the phytoene/squalene synthase family. It depends on Mg(2+) as a cofactor. The cofactor is Mn(2+). Mostly expressed in the shoot apex (buds) and roots, and, to a lower extent, in stems, leaves, flowers and seeds.

It is found in the endoplasmic reticulum membrane. It catalyses the reaction 2 (2E,6E)-farnesyl diphosphate + NADH + H(+) = squalene + 2 diphosphate + NAD(+). The enzyme catalyses 2 (2E,6E)-farnesyl diphosphate + NADPH + H(+) = squalene + 2 diphosphate + NADP(+). It functions in the pathway terpene metabolism; lanosterol biosynthesis; lanosterol from farnesyl diphosphate: step 1/3. Its function is as follows. Component of the triterpene saponins (e.g. ginsenosides or panaxosides) and phytosterols biosynthetic pathways. Catalyzes the biosynthesis of squalene. The protein is Squalene synthase 1 of Panax ginseng (Korean ginseng).